We begin with the raw amino-acid sequence, 246 residues long: DNA repair protein RecO (246 aa).

This sequence belongs to the RecO family.

Functionally, involved in DNA repair and RecF pathway recombination. The chain is DNA repair protein RecO from Maridesulfovibrio salexigens (strain ATCC 14822 / DSM 2638 / NCIMB 8403 / VKM B-1763) (Desulfovibrio salexigens).